We begin with the raw amino-acid sequence, 475 residues long: ATP synthase subunit beta, chloroplastic (475 aa).

G155–T162 lines the ATP pocket.

This sequence belongs to the ATPase alpha/beta chains family. In terms of assembly, F-type ATPases have 2 components, CF(1) - the catalytic core - and CF(0) - the membrane proton channel. CF(1) has five subunits: alpha(3), beta(3), gamma(1), delta(1), epsilon(1). CF(0) has four main subunits: a(1), b(1), b'(1) and c(9-12).

It is found in the plastid. It localises to the chloroplast thylakoid membrane. The enzyme catalyses ATP + H2O + 4 H(+)(in) = ADP + phosphate + 5 H(+)(out). Produces ATP from ADP in the presence of a proton gradient across the membrane. The catalytic sites are hosted primarily by the beta subunits. In Porphyra purpurea (Red seaweed), this protein is ATP synthase subunit beta, chloroplastic.